A 168-amino-acid polypeptide reads, in one-letter code: MPRSRINGNFIDKTSSIVANILLRIIPTTSGEKEAFTYYRDGMSAQSEGNYAEALQNYYEATRPEIDPYDRSYILYNIGLIHTSNGEHTKALEYYFRALERNPFLPQASNNMAVICHYRGEQAIRQGDSEIAETWSDQAAEYWKQAIALTPGNYIEAQNWLKITRRFE.

TPR repeat units lie at residues 35-68 (AFTY…EIDP), 72-105 (SYIL…NPFL), and 120-153 (GEQA…TPGN).

The protein belongs to the Ycf3 family.

It localises to the plastid. The protein resides in the chloroplast thylakoid membrane. Essential for the assembly of the photosystem I (PSI) complex. May act as a chaperone-like factor to guide the assembly of the PSI subunits. The polypeptide is Photosystem I assembly protein Ycf3 (Amborella trichopoda).